A 781-amino-acid polypeptide reads, in one-letter code: Molybdenum cofactor sulfurase (781 aa).

K246 bears the N6-(pyridoxal phosphate)lysine mark. Residue C413 is part of the active site. Positions 619 to 781 (GDAVAQWLSE…MTCGDVVIVE (163 aa)) constitute an MOSC domain. S734 carries the post-translational modification Phosphoserine.

It belongs to the class-V pyridoxal-phosphate-dependent aminotransferase family. MOCOS subfamily. Requires pyridoxal 5'-phosphate as cofactor.

It catalyses the reaction Mo-molybdopterin + L-cysteine + AH2 = thio-Mo-molybdopterin + L-alanine + A + H2O. Its pathway is cofactor biosynthesis; molybdopterin biosynthesis. In terms of biological role, sulfurates the molybdenum cofactor. Sulfation of molybdenum is essential for xanthine dehydrogenase (XDH) and aldehyde oxidase (ADO) enzymes in which molybdenum cofactor is liganded by 1 oxygen and 1 sulfur atom in active form. The sequence is that of Molybdenum cofactor sulfurase from Drosophila erecta (Fruit fly).